We begin with the raw amino-acid sequence, 317 residues long: Melanocyte-stimulating hormone receptor (317 aa).

The Extracellular portion of the chain corresponds to 1-37 (MPVQGSQRRLLGSLNSTPTATPHLGLAANQTGARCLE). Asn29 is a glycosylation site (N-linked (GlcNAc...) asparagine). A helical transmembrane segment spans residues 38-63 (VSVPDGLFLSLGLVSLVENVLVVTAI). Residues 64-72 (AKNRNLHSP) lie on the Cytoplasmic side of the membrane. The helical transmembrane segment at 73-93 (MYCFICCLALSDLLVSGSNML) threads the bilayer. The Extracellular segment spans residues 94–118 (ETAVTLLLEAGALAARAAVVQQLDN). A helical transmembrane segment spans residues 119-140 (VIDVITCSSMLSSLCFLGAIAV). Residues 141–163 (DRYISIFYALRYHSIVTLPRARR) are Cytoplasmic-facing. A helical membrane pass occupies residues 164-183 (AVAAIWVASVLFSTLFIAYY). Residues 184–191 (DHAAVLLC) lie on the Extracellular side of the membrane. A helical membrane pass occupies residues 192 to 211 (LVIFFLAMLVLMAVLYVHML). Over 212 to 240 (ARACQHAQGIARLHKRQRLAHQGFGLKGA) the chain is Cytoplasmic. The chain crosses the membrane as a helical span at residues 241-266 (ATLTILLGIFFLCWGPFFLHLTLIVL). Residues 267-279 (CPQHPTCSCIFKN) lie on the Extracellular side of the membrane. The chain crosses the membrane as a helical span at residues 280–300 (FNLFLALIICNAIIDPLIYAF). Residues 301–317 (RSQELRRTLKEVLLCSW) lie on the Cytoplasmic side of the membrane. Cys315 carries the S-palmitoyl cysteine lipid modification.

The protein belongs to the G-protein coupled receptor 1 family. As to quaternary structure, interacts with MGRN1, but does not undergo MGRN1-mediated ubiquitination; this interaction competes with GNAS-binding and thus inhibits agonist-induced cAMP production. Interacts with OPN3; the interaction results in a decrease in MC1R-mediated cAMP signaling and ultimately a decrease in melanin production in melanocytes.

Its subcellular location is the cell membrane. Its function is as follows. Receptor for MSH (alpha, beta and gamma) and ACTH. The activity of this receptor is mediated by G proteins which activate adenylate cyclase. Mediates melanogenesis, the production of eumelanin (black/brown) and phaeomelanin (red/yellow), via regulation of cAMP signaling in melanocytes. The chain is Melanocyte-stimulating hormone receptor (MC1R) from Papio hamadryas (Hamadryas baboon).